Reading from the N-terminus, the 206-residue chain is Cytochrome c biogenesis ATP-binding export protein CcmA (206 aa).

One can recognise an ABC transporter domain in the interval Val3–Leu206. Gly35–Thr42 provides a ligand contact to ATP.

Belongs to the ABC transporter superfamily. CcmA exporter (TC 3.A.1.107) family. In terms of assembly, the complex is composed of two ATP-binding proteins (CcmA) and two transmembrane proteins (CcmB).

It is found in the cell inner membrane. It catalyses the reaction heme b(in) + ATP + H2O = heme b(out) + ADP + phosphate + H(+). In terms of biological role, part of the ABC transporter complex CcmAB involved in the biogenesis of c-type cytochromes; once thought to export heme, this seems not to be the case, but its exact role is uncertain. Responsible for energy coupling to the transport system. The sequence is that of Cytochrome c biogenesis ATP-binding export protein CcmA from Roseobacter denitrificans (strain ATCC 33942 / OCh 114) (Erythrobacter sp. (strain OCh 114)).